The chain runs to 193 residues: Orotate phosphoribosyltransferase (193 aa).

5-phospho-alpha-D-ribose 1-diphosphate contacts are provided by residues Arg-85, Lys-89, and 111–119 (DDVLTTGKS). Residues Thr-115 and Arg-143 each coordinate orotate.

The protein belongs to the purine/pyrimidine phosphoribosyltransferase family. PyrE subfamily. Homodimer. Mg(2+) is required as a cofactor.

It catalyses the reaction orotidine 5'-phosphate + diphosphate = orotate + 5-phospho-alpha-D-ribose 1-diphosphate. It participates in pyrimidine metabolism; UMP biosynthesis via de novo pathway; UMP from orotate: step 1/2. Its function is as follows. Catalyzes the transfer of a ribosyl phosphate group from 5-phosphoribose 1-diphosphate to orotate, leading to the formation of orotidine monophosphate (OMP). This is Orotate phosphoribosyltransferase from Pyrobaculum aerophilum (strain ATCC 51768 / DSM 7523 / JCM 9630 / CIP 104966 / NBRC 100827 / IM2).